The following is a 166-amino-acid chain: Phosphopantetheine adenylyltransferase (166 aa).

Serine 11 is a substrate binding site. Residues 11–12 (SF) and histidine 19 contribute to the ATP site. Substrate contacts are provided by lysine 43, alanine 76, and arginine 90. ATP is bound by residues 91-93 (GLR), glutamate 101, and 126-132 (MQPISSS).

Belongs to the bacterial CoaD family. As to quaternary structure, homohexamer. Requires Mg(2+) as cofactor.

The protein localises to the cytoplasm. The catalysed reaction is (R)-4'-phosphopantetheine + ATP + H(+) = 3'-dephospho-CoA + diphosphate. It functions in the pathway cofactor biosynthesis; coenzyme A biosynthesis; CoA from (R)-pantothenate: step 4/5. Its function is as follows. Reversibly transfers an adenylyl group from ATP to 4'-phosphopantetheine, yielding dephospho-CoA (dPCoA) and pyrophosphate. The sequence is that of Phosphopantetheine adenylyltransferase from Streptococcus uberis (strain ATCC BAA-854 / 0140J).